Here is a 1007-residue protein sequence, read N- to C-terminus: Protocadherin alpha-C2 (1007 aa).

The N-terminal stretch at Met1–Ser42 is a signal peptide. 5 Cadherin domains span residues Gln43–Phe148, Pro149–Phe257, Asp258–Val365, Val374–Phe469, and Leu470–Ile579. The Extracellular segment spans residues Gln43–Leu708. N-linked (GlcNAc...) asparagine glycans are attached at residues Asn280 and Asn436. Residues Asn586 and Asn657 are each glycosylated (N-linked (GlcNAc...) asparagine). The region spanning Val594–Thr691 is the Cadherin 6 domain. Residues Ile709–Ile729 traverse the membrane as a helical segment. Residues Lys730–Gln1007 are Cytoplasmic-facing. PXXP repeat units follow at residues Pro856–Pro859, Pro889–Pro892, Pro930–Pro933, and Pro948–Pro951. Residues Pro856–Pro951 form a 4 X 4 AA repeats of P-X-X-P region. The tract at residues Leu885–Gln1007 is disordered. The span at Asp966–Lys980 shows a compositional bias: basic and acidic residues.

It localises to the cell membrane. In terms of biological role, potential calcium-dependent cell-adhesion protein. May be involved in the establishment and maintenance of specific neuronal connections in the brain. This is Protocadherin alpha-C2 (PCDHAC2) from Homo sapiens (Human).